The chain runs to 279 residues: Tumor protein p63-regulated gene 1 protein (279 aa).

The disordered stretch occupies residues Met1–Gln49. One can recognise a hSac2 domain in the interval Val72–Met259.

It belongs to the TPRG1 family. As to expression, highly expressed in skin. Also detected at low levels in tongue and esophagus.

Its subcellular location is the cytoplasm. In Mus musculus (Mouse), this protein is Tumor protein p63-regulated gene 1 protein.